Consider the following 224-residue polypeptide: Ribonuclease T (224 aa).

The 175-residue stretch at 32–206 folds into the Exonuclease domain; that stretch reads VVVDVETGGF…YDTEKTAELF (175 aa). 4 residues coordinate Mg(2+): Asp35, Glu37, His193, and Asp198. Catalysis depends on His193, which acts as the Proton donor/acceptor.

This sequence belongs to the RNase T family. In terms of assembly, homodimer. The cofactor is Mg(2+).

Functionally, trims short 3' overhangs of a variety of RNA species, leaving a one or two nucleotide 3' overhang. Responsible for the end-turnover of tRNA: specifically removes the terminal AMP residue from uncharged tRNA (tRNA-C-C-A). Also appears to be involved in tRNA biosynthesis. This chain is Ribonuclease T, found in Pseudomonas fluorescens (strain Pf0-1).